Consider the following 43-residue polypeptide: Thymosin beta-b (43 aa).

2 stretches are compositionally biased toward basic and acidic residues: residues 1 to 25 (MADK…ETQE) and 33 to 43 (ETIEQEKQCEA). The disordered stretch occupies residues 1–43 (MADKPDISEVSQFDKTKLKKTETQEKNTLPTKETIEQEKQCEA).

It belongs to the thymosin beta family.

The protein resides in the cytoplasm. It is found in the cytoskeleton. Functionally, plays an important role in the organization of the cytoskeleton. Binds to and sequesters actin monomers (G actin) and therefore inhibits actin polymerization. This chain is Thymosin beta-b, found in Cyprinus carpio (Common carp).